A 1064-amino-acid chain; its full sequence is WD repeat-containing protein on Y chromosome (1064 aa).

WD repeat units follow at residues 150 to 194 (EEVT…IRTA), 317 to 356 (RIPLGVSTFFVAESHNIVVTGGPDTFVRIWDVYIPTEPSA), 360 to 399 (GHNGGIVLVFVQPEENKVYSVDYQKIIKVWDLQEHTLLQT), 450 to 489 (THAAPVSVVLYNRLFRNIVTCGLDSYIIVWDPWTGRRKII), 502 to 541 (IIDIEITAACFDPLEQFLLTGARDGSLKIWNYNNAVVVRN), 589 to 629 (FHTD…RRYS), 742 to 781 (KTGDCVLTMCTDRKNRFLYTGTAFGYVKIWYIVNFCVPAS), and 825 to 864 (GHLKAINSIAFINLPKIVFTGSHDYSCRLWTQGGRYLGTL). Positions 1022-1044 (SSLNIKQPTRRRSGKTHDPRNIR) are disordered.

The protein is WD repeat-containing protein on Y chromosome of Drosophila ananassae (Fruit fly).